A 79-amino-acid polypeptide reads, in one-letter code: Pyridoxal 5'-phosphate synthase PDX1-like 4 (79 aa).

Belongs to the PdxS/SNZ family.

This Arabidopsis thaliana (Mouse-ear cress) protein is Pyridoxal 5'-phosphate synthase PDX1-like 4 (PDX1L4).